Consider the following 196-residue polypeptide: Chaperone protein TorD (196 aa).

This sequence belongs to the TorD/DmsD family. TorD subfamily.

The protein localises to the cytoplasm. Functionally, involved in the biogenesis of TorA. Acts on TorA before the insertion of the molybdenum cofactor and, as a result, probably favors a conformation of the apoenzyme that is competent for acquiring the cofactor. This Pasteurella multocida (strain Pm70) protein is Chaperone protein TorD.